A 213-amino-acid chain; its full sequence is Motile sperm domain-containing protein 1 (213 aa).

The MSP domain maps to 16-143 (PVFVFPTELI…KEHLTESLFF (128 aa)). The next 2 membrane-spanning stretches (helical) occupy residues 159–179 (SLLT…PTLG) and 191–211 (LSVN…MAIL). The short motif at 205 to 208 (LITM) is the Nuclear export signal element.

The protein resides in the endoplasmic reticulum membrane. It is found in the golgi apparatus membrane. Functionally, plays a role in differentiation and/or proliferation of mesenchymal stem cells. Proposed to be involved in epithelial-to-mesenchymal transition (EMT). However, another study suggests that it is not required for EMT or stem cell self-renewal and acts during later stages of differentiation. The polypeptide is Motile sperm domain-containing protein 1 (MOSPD1) (Pongo abelii (Sumatran orangutan)).